Reading from the N-terminus, the 73-residue chain is Cx9C motif-containing protein 4, mitochondrial (73 aa).

The 43-residue stretch at S2–N44 folds into the CHCH domain. 2 consecutive short sequence motifs (cx9C motif) follow at residues C5 to C15 and C26 to C36. Intrachain disulfides connect C5–C36 and C15–C26.

This sequence belongs to the CMC4 family.

It localises to the mitochondrion intermembrane space. This is Cx9C motif-containing protein 4, mitochondrial (CMC4) from Saccharomyces cerevisiae (strain RM11-1a) (Baker's yeast).